A 1422-amino-acid polypeptide reads, in one-letter code: YEATS domain-containing protein 2 (1422 aa).

Residue K9 forms a Glycyl lysine isopeptide (Lys-Gly) (interchain with G-Cter in SUMO2) linkage. Residues 47–80 (KEQFALEMKNKEHEIEVIDQRLIEARRMMDKLRA) adopt a coiled-coil conformation. K113 participates in a covalent cross-link: Glycyl lysine isopeptide (Lys-Gly) (interchain with G-Cter in SUMO2). A disordered region spans residues 117–198 (ESPSRSSSPA…KTEQRNADLT (82 aa)). Phosphoserine is present on residues S118, S120, and S157. Residues 119-148 (PSRSSSPANQRAETPSANHSESDSLSQHND) are compositionally biased toward polar residues. A compositionally biased stretch (basic and acidic residues) spans 149-165 (FLSDKDNNSNMDIEERL). Residues 166–176 (SNNMEQRPSRN) are compositionally biased toward polar residues. Basic and acidic residues predominate over residues 177-198 (TGRDTSRITGSHKTEQRNADLT). Residue K189 forms a Glycyl lysine isopeptide (Lys-Gly) (interchain with G-Cter in SUMO2) linkage. The 146-residue stretch at 200 to 345 (ETSRLFVKKT…EDCIYPQSSE (146 aa)) folds into the YEATS domain. Histone H3K27cr binding stretches follow at residues 259 to 261 (HPS) and 282 to 284 (WGE). A Glycyl lysine isopeptide (Lys-Gly) (interchain with G-Cter in SUMO2) cross-link involves residue K370. T407 is subject to Phosphothreonine. Phosphoserine occurs at positions 447, 463, 465, 471, and 473. The segment at 465-486 (SPISTPSPSPLPRTPTSTPVHV) is disordered. Phosphothreonine is present on T478. A Glycyl lysine isopeptide (Lys-Gly) (interchain with G-Cter in SUMO2) cross-link involves residue K487. A compositionally biased stretch (polar residues) spans 513 to 535 (TTPSTGSPTNKISTASQVSQGTG). The segment at 513–540 (TTPSTGSPTNKISTASQVSQGTGSPVPK) is disordered. The residue at position 536 (S536) is a Phosphoserine. Residue K552 forms a Glycyl lysine isopeptide (Lys-Gly) (interchain with G-Cter in SUMO2) linkage. S575 bears the Phosphoserine mark. Residue K592 forms a Glycyl lysine isopeptide (Lys-Gly) (interchain with G-Cter in SUMO2) linkage. S627 carries the phosphoserine modification. Glycyl lysine isopeptide (Lys-Gly) (interchain with G-Cter in SUMO2) cross-links involve residues K649 and K773. The segment at 794–842 (GSAASGGSGAGGGGGGGGGGGSGSGGGGSTGGGGGTAGGGTQSTAGPGG) is disordered. Residues 797–842 (ASGGSGAGGGGGGGGGGGSGSGGGGSTGGGGGTAGGGTQSTAGPGG) show a composition bias toward gly residues. Residue K923 forms a Glycyl lysine isopeptide (Lys-Gly) (interchain with G-Cter in SUMO2) linkage. K1110 participates in a covalent cross-link: Glycyl lysine isopeptide (Lys-Gly) (interchain with G-Cter in SUMO1); alternate. Residue K1110 forms a Glycyl lysine isopeptide (Lys-Gly) (interchain with G-Cter in SUMO2); alternate linkage. K1130 participates in a covalent cross-link: Glycyl lysine isopeptide (Lys-Gly) (interchain with G-Cter in SUMO2). T1219 is modified (phosphothreonine). Glycyl lysine isopeptide (Lys-Gly) (interchain with G-Cter in SUMO2) cross-links involve residues K1222 and K1285.

In terms of assembly, component of the ADA2A-containing complex (ATAC), composed of KAT14, KAT2A, TADA2L, TADA3L, ZZ3, MBIP, WDR5, YEATS2, SGF29 and DR1.

It localises to the nucleus. Chromatin reader component of the ATAC complex, a complex with histone acetyltransferase activity on histones H3 and H4. YEATS2 specifically recognizes and binds histone H3 crotonylated at 'Lys-27' (H3K27cr). Crotonylation marks active promoters and enhancers and confers resistance to transcriptional repressors. This Homo sapiens (Human) protein is YEATS domain-containing protein 2.